We begin with the raw amino-acid sequence, 285 residues long: Nucleotide-binding protein Glov_2163 (285 aa).

8–15 contacts ATP; it reads GMSGSGKS. Residue 59–62 participates in GTP binding; it reads DIRG.

Belongs to the RapZ-like family.

Its function is as follows. Displays ATPase and GTPase activities. The sequence is that of Nucleotide-binding protein Glov_2163 from Trichlorobacter lovleyi (strain ATCC BAA-1151 / DSM 17278 / SZ) (Geobacter lovleyi).